The sequence spans 595 residues: Elongation factor 4 (595 aa).

In terms of domain architecture, tr-type G spans 2-184 (KNIRNFSIIA…QIVEKIPAPK (183 aa)). GTP contacts are provided by residues 14–19 (DHGKST) and 131–134 (NKID).

The protein belongs to the TRAFAC class translation factor GTPase superfamily. Classic translation factor GTPase family. LepA subfamily.

The protein resides in the cell inner membrane. It carries out the reaction GTP + H2O = GDP + phosphate + H(+). Its function is as follows. Required for accurate and efficient protein synthesis under certain stress conditions. May act as a fidelity factor of the translation reaction, by catalyzing a one-codon backward translocation of tRNAs on improperly translocated ribosomes. Back-translocation proceeds from a post-translocation (POST) complex to a pre-translocation (PRE) complex, thus giving elongation factor G a second chance to translocate the tRNAs correctly. Binds to ribosomes in a GTP-dependent manner. This chain is Elongation factor 4, found in Ruthia magnifica subsp. Calyptogena magnifica.